A 41-amino-acid chain; its full sequence is Photosystem I reaction center subunit IX (41 aa).

The helical transmembrane segment at 7 to 27 (YLSTAPVLATLWFGFLAGLLI) threads the bilayer.

This sequence belongs to the PsaJ family.

It localises to the plastid. The protein localises to the chloroplast thylakoid membrane. Its function is as follows. May help in the organization of the PsaE and PsaF subunits. In Physcomitrium patens (Spreading-leaved earth moss), this protein is Photosystem I reaction center subunit IX.